Consider the following 519-residue polypeptide: Histidine--tRNA ligase (519 aa).

This sequence belongs to the class-II aminoacyl-tRNA synthetase family. Homodimer.

The protein resides in the cytoplasm. The catalysed reaction is tRNA(His) + L-histidine + ATP = L-histidyl-tRNA(His) + AMP + diphosphate + H(+). This chain is Histidine--tRNA ligase, found in Rhodopseudomonas palustris (strain BisB18).